We begin with the raw amino-acid sequence, 939 residues long: Valine--tRNA ligase (939 aa).

A 'HIGH' region motif is present at residues 47–57 (PNVTGILHMGH). The short motif at 563 to 567 (KLSKS) is the 'KMSKS' region element. Lys566 contributes to the ATP binding site. Residues 874 to 939 (EHLAKERVRL…QSILDKLASL (66 aa)) are a coiled coil.

It belongs to the class-I aminoacyl-tRNA synthetase family. ValS type 1 subfamily. Monomer.

The protein localises to the cytoplasm. The catalysed reaction is tRNA(Val) + L-valine + ATP = L-valyl-tRNA(Val) + AMP + diphosphate. Catalyzes the attachment of valine to tRNA(Val). As ValRS can inadvertently accommodate and process structurally similar amino acids such as threonine, to avoid such errors, it has a 'posttransfer' editing activity that hydrolyzes mischarged Thr-tRNA(Val) in a tRNA-dependent manner. This chain is Valine--tRNA ligase, found in Chlamydia trachomatis serovar A (strain ATCC VR-571B / DSM 19440 / HAR-13).